A 574-amino-acid chain; its full sequence is Membrane protein insertase YidC (574 aa).

A helical transmembrane segment spans residues 6–26 (VFLIFAWLMVAALLWMEWGKE). A disordered region spans residues 65-85 (QAGAPGKVPATSTTTATPAAA). The next 5 membrane-spanning stretches (helical) occupy residues 350–370 (VIDY…FWVL), 376–396 (FLHN…LVLY), 447–467 (GGCL…WVLV), 491–511 (FILP…TPTP), and 525–545 (PLVF…YWVV).

Belongs to the OXA1/ALB3/YidC family. Type 1 subfamily. As to quaternary structure, interacts with the Sec translocase complex via SecD. Specifically interacts with transmembrane segments of nascent integral membrane proteins during membrane integration.

It localises to the cell inner membrane. Its function is as follows. Required for the insertion and/or proper folding and/or complex formation of integral membrane proteins into the membrane. Involved in integration of membrane proteins that insert both dependently and independently of the Sec translocase complex, as well as at least some lipoproteins. Aids folding of multispanning membrane proteins. This chain is Membrane protein insertase YidC, found in Xanthomonas oryzae pv. oryzae (strain PXO99A).